The following is a 149-amino-acid chain: Cytochrome c-556 (149 aa).

The first 20 residues, 1–20 (MLRTVIVAGALVLTASAVMA), serve as a signal peptide directing secretion. The heme c site is built by Met-32, Cys-137, Cys-140, and His-141.

Monomer. In terms of processing, binds 1 heme c group covalently per subunit.

Its function is as follows. Low-spin monoheme cytochrome c. This is Cytochrome c-556 from Rhodopseudomonas palustris (strain ATCC BAA-98 / CGA009).